The following is a 106-amino-acid chain: MAPLIPGELLTEPGELELNAGRPVTTLSVSNSGDRPVQVGSHFHFAEANAALQFDRAAARGQRLDIPAGTAIRFEPGDSRDVNLIPFAGARCVIGFNGQINGPLDA.

This sequence belongs to the urease beta subunit family. Heterotrimer of UreA (gamma), UreB (beta) and UreC (alpha) subunits. Three heterotrimers associate to form the active enzyme.

Its subcellular location is the cytoplasm. The catalysed reaction is urea + 2 H2O + H(+) = hydrogencarbonate + 2 NH4(+). It functions in the pathway nitrogen metabolism; urea degradation; CO(2) and NH(3) from urea (urease route): step 1/1. This is Urease subunit beta from Synechococcus sp. (strain CC9605).